Here is a 426-residue protein sequence, read N- to C-terminus: Serine--tRNA ligase (426 aa).

233-235 (TSE) provides a ligand contact to L-serine. 264 to 266 (RSE) is an ATP binding site. L-serine is bound at residue glutamate 287. ATP is bound at residue 351–354 (EISS). Serine 387 is a binding site for L-serine.

It belongs to the class-II aminoacyl-tRNA synthetase family. Type-1 seryl-tRNA synthetase subfamily. In terms of assembly, homodimer. The tRNA molecule binds across the dimer.

It is found in the cytoplasm. The enzyme catalyses tRNA(Ser) + L-serine + ATP = L-seryl-tRNA(Ser) + AMP + diphosphate + H(+). It carries out the reaction tRNA(Sec) + L-serine + ATP = L-seryl-tRNA(Sec) + AMP + diphosphate + H(+). The protein operates within aminoacyl-tRNA biosynthesis; selenocysteinyl-tRNA(Sec) biosynthesis; L-seryl-tRNA(Sec) from L-serine and tRNA(Sec): step 1/1. Its function is as follows. Catalyzes the attachment of serine to tRNA(Ser). Is also able to aminoacylate tRNA(Sec) with serine, to form the misacylated tRNA L-seryl-tRNA(Sec), which will be further converted into selenocysteinyl-tRNA(Sec). This Colwellia psychrerythraea (strain 34H / ATCC BAA-681) (Vibrio psychroerythus) protein is Serine--tRNA ligase.